Here is a 648-residue protein sequence, read N- to C-terminus: DNA mismatch repair protein MutL (648 aa).

A disordered region spans residues 336 to 443 (ERPFEPSSPQ…SGSAGESRAR (108 aa)). A compositionally biased stretch (polar residues) spans 370-381 (SPESKTHSTWNE). The segment covering 383 to 410 (SRVDTSRAETSRESRIDSPLGERTRDIA) has biased composition (basic and acidic residues).

The protein belongs to the DNA mismatch repair MutL/HexB family.

Its function is as follows. This protein is involved in the repair of mismatches in DNA. It is required for dam-dependent methyl-directed DNA mismatch repair. May act as a 'molecular matchmaker', a protein that promotes the formation of a stable complex between two or more DNA-binding proteins in an ATP-dependent manner without itself being part of a final effector complex. The protein is DNA mismatch repair protein MutL of Shewanella sp. (strain ANA-3).